The chain runs to 368 residues: MSNAPILLTPGPLTTSIRTRQAMLVDWGSWDRDFNQLTASVCEQLLAIIDGASSHHCVPLQGSGTFAVEAAIGTLVPRDGKVLVLINGAYGQRLAKICKVLGRTYSTFETAEDQPTTAADVDRLLAEDSAITHVALIHCETSTGILNPLPEIAQVIKHHGKRLIIDAMSSFGALPIDAREIPFEALIAASGKCLEGVPGMGFVFAEKNALAAAEGNAHSLAMDLHDQHAYMAKTGQWRFTPPTHVVAALHEALQQYNEEGGLPARHQRYADNCKTLLDGMAAIGLRSFLPAEIQAPIIVTFHAPTDARYQFKDFYERVKAKGFILYPGKLTQVETFRVGCIGVVGADGMQAAVNAVAEVLREMEVLDI.

An N6-(pyridoxal phosphate)lysine modification is found at Lys-192.

It belongs to the class-V pyridoxal-phosphate-dependent aminotransferase family. PhnW subfamily. As to quaternary structure, homodimer. It depends on pyridoxal 5'-phosphate as a cofactor.

It catalyses the reaction (2-aminoethyl)phosphonate + pyruvate = phosphonoacetaldehyde + L-alanine. Involved in phosphonate degradation. This is 2-aminoethylphosphonate--pyruvate transaminase from Pseudomonas putida (strain ATCC 700007 / DSM 6899 / JCM 31910 / BCRC 17059 / LMG 24140 / F1).